The following is a 410-amino-acid chain: MVTVNENYLLLKSSYIFSEINRRVEEFQRKNPDADIIRMGIGDVTRPLPEAVVEAFHRAVDEMAEEETFRGYGPEQGYPFLREAIAENDYASRGVDITADEIFISDGAKCDTGNIQEIFGLDNVVAVTDPVYPVYVESNVMAGRAGPADDDGRYSGLVYLPCTEENSFIPSLPEERVDLIYLCYPNNPTGTTLTEKQLAEWVDYARDSGSLILFDAAYEAYIQEDGIPHSIYEVEGAREVAIEFRSFSKNAGFTGTRCAFTVVPEELEVPDSSGRMHSVRELWNRRQTTKFNGVSYPVQRAAEAVYTPEGQREIRESIDYYMENARIIRESLERAGLRYYGGVNAPYIWIRTPEGMDSWQFFDTLLNDAEVVGTPGSGFGPSGEGYFRLTAFNSFRNTVKAMERISELSF.

Substrate-binding residues include tyrosine 15 and glycine 42. Residues tyrosine 72, 108–109 (AK), tyrosine 132, asparagine 187, tyrosine 218, and 246–248 (SFS) each bind pyridoxal 5'-phosphate. Residues lysine 109, tyrosine 132, and asparagine 187 each contribute to the substrate site. Lysine 249 bears the N6-(pyridoxal phosphate)lysine mark. Arginine 257 and asparagine 292 together coordinate pyridoxal 5'-phosphate. Positions 292 and 388 each coordinate substrate.

This sequence belongs to the class-I pyridoxal-phosphate-dependent aminotransferase family. LL-diaminopimelate aminotransferase subfamily. Homodimer. Pyridoxal 5'-phosphate is required as a cofactor.

It carries out the reaction (2S,6S)-2,6-diaminopimelate + 2-oxoglutarate = (S)-2,3,4,5-tetrahydrodipicolinate + L-glutamate + H2O + H(+). It participates in amino-acid biosynthesis; L-lysine biosynthesis via DAP pathway; LL-2,6-diaminopimelate from (S)-tetrahydrodipicolinate (aminotransferase route): step 1/1. In terms of biological role, involved in the synthesis of meso-diaminopimelate (m-DAP or DL-DAP), required for both lysine and peptidoglycan biosynthesis. Catalyzes the direct conversion of tetrahydrodipicolinate to LL-diaminopimelate. Is also able to catalyze the reverse reaction in vitro, i.e. the transamination of LL-diaminopimelate with 2-oxoglutarate to produce 2-oxo-6-aminopimelate (in equilibrium with tetrahydrodipicolinate) and glutamate. Has maximal aminotransferase activity using 2-oxoglutarate as an amino group acceptor, and cannot use oxaloacetate instead of 2-oxoglutarate, although 2-oxoadipate can substitute with 21% relative activity. Cannot use m-DAP, lysine or ornithine as the amino-group donor, when using 2-oxoglutarate as the amino-group acceptor. The sequence is that of LL-diaminopimelate aminotransferase from Methanothermobacter thermautotrophicus (strain ATCC 29096 / DSM 1053 / JCM 10044 / NBRC 100330 / Delta H) (Methanobacterium thermoautotrophicum).